The following is a 530-amino-acid chain: Pyridoxine/pyridoxamine 5'-phosphate oxidase 1, chloroplastic (530 aa).

A chloroplast-targeting transit peptide spans 1-64 (MRNVIRRVTT…TLCTKVIIPN (64 aa)). Residue methionine 65 is modified to N-acetylmethionine. The YjeF N-terminal domain maps to 81–297 (AAEIDETLMG…SVAEKYKLEL (217 aa)). 131–135 (NNGGD) lines the (6S)-NADPHX pocket. K(+)-binding residues include asparagine 132 and aspartate 196. (6S)-NADPHX contacts are provided by residues 200-206 (GFSFHGA) and aspartate 238. Position 241 (serine 241) interacts with K(+). 247 to 250 (EGDH) is a pyridoxal 5'-phosphate binding site. 321 to 324 (RVNY) provides a ligand contact to substrate. 325 to 327 (VSP) is a pyridoxal 5'-phosphate binding site. FMN is bound at residue 374 to 377 (RMVL). A pyridoxal 5'-phosphate-binding site is contributed by lysine 379. FMN is bound by residues 389 to 390 (FT), 395 to 396 (KK), and glutamine 418. Pyridoxal 5'-phosphate is bound by residues tyrosine 436, arginine 440, and serine 444. FMN contacts are provided by residues 453 to 454 (QS) and tryptophan 499. 505-507 (RLH) is a pyridoxal 5'-phosphate binding site. Residue arginine 509 participates in FMN binding.

In the N-terminal section; belongs to the NnrE/AIBP family. It in the C-terminal section; belongs to the pyridoxamine 5'-phosphate oxidase family. Homodimer. Requires FMN as cofactor. K(+) is required as a cofactor. In terms of tissue distribution, expressed in leaves, stems, flowers and roots.

The protein localises to the plastid. It localises to the chloroplast. It catalyses the reaction pyridoxamine 5'-phosphate + O2 + H2O = pyridoxal 5'-phosphate + H2O2 + NH4(+). It carries out the reaction pyridoxine 5'-phosphate + O2 = pyridoxal 5'-phosphate + H2O2. The catalysed reaction is (6R)-NADHX = (6S)-NADHX. The enzyme catalyses (6R)-NADPHX = (6S)-NADPHX. It functions in the pathway cofactor metabolism; pyridoxal 5'-phosphate salvage; pyridoxal 5'-phosphate from pyridoxamine 5'-phosphate: step 1/1. It participates in cofactor metabolism; pyridoxal 5'-phosphate salvage; pyridoxal 5'-phosphate from pyridoxine 5'-phosphate: step 1/1. Catalyzes the oxidation of either pyridoxine 5'-phosphate (PNP) or pyridoxamine 5'-phosphate (PMP) into pyridoxal 5'-phosphate (PLP). Involved in the PLP salvage pathway. Has a higher preference for PNP over PMP. May also catalyze the epimerization of the S- and R-forms of NAD(P)HX, a damaged form of NAD(P)H that is a result of enzymatic or heat-dependent hydration. This is a prerequisite for the S-specific NAD(P)H-hydrate dehydratase to allow the repair of both epimers of NAD(P)HX. The protein is Pyridoxine/pyridoxamine 5'-phosphate oxidase 1, chloroplastic (PPOX1) of Arabidopsis thaliana (Mouse-ear cress).